A 171-amino-acid polypeptide reads, in one-letter code: Cytochrome c-type biogenesis protein CcmE (171 aa).

At 1-7 the chain is on the cytoplasmic side; the sequence is MNRKQKR. Residues 8-28 form a helical; Signal-anchor for type II membrane protein membrane-spanning segment; it reads LAVIAGGMGFIAAAVLLVMFA. Over 29–171 the chain is Periplasmic; the sequence is FSQSVAYFYM…NPGEEAKATQ (143 aa). 2 residues coordinate heme: H124 and Y128. Positions 132–171 are disordered; the sequence is DVADRLKQQGLWKEGQGGQESPGKEGQGQENPGEEAKATQ.

This sequence belongs to the CcmE/CycJ family.

The protein resides in the cell inner membrane. In terms of biological role, heme chaperone required for the biogenesis of c-type cytochromes. Transiently binds heme delivered by CcmC and transfers the heme to apo-cytochromes in a process facilitated by CcmF and CcmH. This is Cytochrome c-type biogenesis protein CcmE from Rhizobium leguminosarum bv. trifolii (strain WSM2304).